Here is a 317-residue protein sequence, read N- to C-terminus: 1D-myo-inositol 2-acetamido-2-deoxy-alpha-D-glucopyranoside deacetylase (317 aa).

Residues His-15, Asp-18, and His-154 each contribute to the Zn(2+) site. Residues 289–317 (QDLDNRNPNSQPPADQAREDHLLTGLGFA) form a disordered region.

This sequence belongs to the MshB deacetylase family. Requires Zn(2+) as cofactor.

The enzyme catalyses 1D-myo-inositol 2-acetamido-2-deoxy-alpha-D-glucopyranoside + H2O = 1D-myo-inositol 2-amino-2-deoxy-alpha-D-glucopyranoside + acetate. Catalyzes the deacetylation of 1D-myo-inositol 2-acetamido-2-deoxy-alpha-D-glucopyranoside (GlcNAc-Ins) in the mycothiol biosynthesis pathway. The sequence is that of 1D-myo-inositol 2-acetamido-2-deoxy-alpha-D-glucopyranoside deacetylase from Segniliparus rotundus (strain ATCC BAA-972 / CDC 1076 / CIP 108378 / DSM 44985 / JCM 13578).